Reading from the N-terminus, the 462-residue chain is Envelope glycoprotein C (462 aa).

The signal sequence occupies residues methionine 1–glycine 23. Topologically, residues threonine 24 to methionine 433 are virion surface. The segment covering threonine 29–glycine 38 has biased composition (low complexity). The interval threonine 29–arginine 57 is disordered. Residues isoleucine 39–arginine 57 show a composition bias toward polar residues. N-linked (GlcNAc...) asparagine; by host glycans are attached at residues asparagine 66, asparagine 94, asparagine 136, asparagine 173, asparagine 249, and asparagine 417. The helical transmembrane segment at leucine 434 to isoleucine 454 threads the bilayer. Over serine 455–glycine 462 the chain is Cytoplasmic.

The protein belongs to the herpesviridae glycoprotein C family.

It localises to the virion membrane. This is Envelope glycoprotein C (gC) from Psittacid herpesvirus 1 (isolate Amazon parrot/-/97-0001/1997) (PsHV-1).